The sequence spans 230 residues: 2,3-bisphosphoglycerate-dependent phosphoglycerate mutase (230 aa).

Substrate is bound by residues 10-17, 23-24, Arg62, 89-92, Lys100, 116-117, and 185-186; these read RHGQSKWN, TG, ERHY, RR, and GN. The active-site Tele-phosphohistidine intermediate is the His11. The active-site Proton donor/acceptor is the Glu89.

It belongs to the phosphoglycerate mutase family. BPG-dependent PGAM subfamily. Homodimer.

The catalysed reaction is (2R)-2-phosphoglycerate = (2R)-3-phosphoglycerate. It functions in the pathway carbohydrate degradation; glycolysis; pyruvate from D-glyceraldehyde 3-phosphate: step 3/5. In terms of biological role, catalyzes the interconversion of 2-phosphoglycerate and 3-phosphoglycerate. The sequence is that of 2,3-bisphosphoglycerate-dependent phosphoglycerate mutase from Buchnera aphidicola subsp. Schizaphis graminum (strain Sg).